A 462-amino-acid polypeptide reads, in one-letter code: Argininosuccinate lyase (462 aa).

Belongs to the lyase 1 family. Argininosuccinate lyase subfamily.

Its subcellular location is the cytoplasm. The catalysed reaction is 2-(N(omega)-L-arginino)succinate = fumarate + L-arginine. It participates in amino-acid biosynthesis; L-arginine biosynthesis; L-arginine from L-ornithine and carbamoyl phosphate: step 3/3. This Bacillus cytotoxicus (strain DSM 22905 / CIP 110041 / 391-98 / NVH 391-98) protein is Argininosuccinate lyase.